A 340-amino-acid chain; its full sequence is MTDHALLLVNLGSPASTQVADVRSYLNQFLMDPYVIDLPWPVRRLLVSLILIKRPEQSAHAYASIWWDEGSPLVVLSKRLQQAMKKEWSHGPVELAMRYGEPSIETVLTRLAEQGFKKVTLAPLYPQFADSTVTTVIEEAKRVVRAKSLKMQFSVLQPFYDQPEYLSALVESVRPHLEQPYDHLLLSFHGLPERHLHKLDPTGKHCLKDDCCMTAPAEVLATCYRAQCIQSAAAFAKRMGIADGKWSVSFQSRLGRAKWIEPYTEAHLDELAAKGVKKLLVMCPAFVADCIETLEEIGDRGAEQFKEAGGEELILIPCLNDDPNWAKELNRLCERAPLML.

Residues histidine 189 and glutamate 292 each coordinate Fe cation.

It belongs to the ferrochelatase family.

It localises to the cytoplasm. The catalysed reaction is heme b + 2 H(+) = protoporphyrin IX + Fe(2+). It functions in the pathway porphyrin-containing compound metabolism; protoheme biosynthesis; protoheme from protoporphyrin-IX: step 1/1. Catalyzes the ferrous insertion into protoporphyrin IX. The protein is Ferrochelatase of Pseudomonas syringae pv. syringae (strain B728a).